Here is a 284-residue protein sequence, read N- to C-terminus: Phosphoribosylaminoimidazole-succinocarboxamide synthase (284 aa).

The protein belongs to the SAICAR synthetase family.

It carries out the reaction 5-amino-1-(5-phospho-D-ribosyl)imidazole-4-carboxylate + L-aspartate + ATP = (2S)-2-[5-amino-1-(5-phospho-beta-D-ribosyl)imidazole-4-carboxamido]succinate + ADP + phosphate + 2 H(+). The protein operates within purine metabolism; IMP biosynthesis via de novo pathway; 5-amino-1-(5-phospho-D-ribosyl)imidazole-4-carboxamide from 5-amino-1-(5-phospho-D-ribosyl)imidazole-4-carboxylate: step 1/2. The chain is Phosphoribosylaminoimidazole-succinocarboxamide synthase from Chromobacterium violaceum (strain ATCC 12472 / DSM 30191 / JCM 1249 / CCUG 213 / NBRC 12614 / NCIMB 9131 / NCTC 9757 / MK).